A 188-amino-acid chain; its full sequence is Phosphoribosylglycinamide formyltransferase (188 aa).

12–14 (GSN) contacts N(1)-(5-phospho-beta-D-ribosyl)glycinamide. (6R)-10-formyltetrahydrofolate-binding positions include lysine 66, 91–94 (MRLI), and asparagine 108. Histidine 110 serves as the catalytic Proton donor.

The protein belongs to the GART family.

The catalysed reaction is N(1)-(5-phospho-beta-D-ribosyl)glycinamide + (6R)-10-formyltetrahydrofolate = N(2)-formyl-N(1)-(5-phospho-beta-D-ribosyl)glycinamide + (6S)-5,6,7,8-tetrahydrofolate + H(+). Its pathway is purine metabolism; IMP biosynthesis via de novo pathway; N(2)-formyl-N(1)-(5-phospho-D-ribosyl)glycinamide from N(1)-(5-phospho-D-ribosyl)glycinamide (10-formyl THF route): step 1/1. In terms of biological role, catalyzes the transfer of a formyl group from 10-formyltetrahydrofolate to 5-phospho-ribosyl-glycinamide (GAR), producing 5-phospho-ribosyl-N-formylglycinamide (FGAR) and tetrahydrofolate. This chain is Phosphoribosylglycinamide formyltransferase, found in Staphylococcus aureus (strain MSSA476).